The following is a 476-amino-acid chain: 3-isopropylmalate dehydratase large subunit (476 aa).

The [4Fe-4S] cluster site is built by Cys-353, Cys-413, and Cys-416.

It belongs to the aconitase/IPM isomerase family. LeuC type 1 subfamily. As to quaternary structure, heterodimer of LeuC and LeuD. The cofactor is [4Fe-4S] cluster.

The catalysed reaction is (2R,3S)-3-isopropylmalate = (2S)-2-isopropylmalate. It participates in amino-acid biosynthesis; L-leucine biosynthesis; L-leucine from 3-methyl-2-oxobutanoate: step 2/4. Functionally, catalyzes the isomerization between 2-isopropylmalate and 3-isopropylmalate, via the formation of 2-isopropylmaleate. The sequence is that of 3-isopropylmalate dehydratase large subunit from Yersinia pseudotuberculosis serotype O:1b (strain IP 31758).